Here is an 81-residue protein sequence, read N- to C-terminus: Small ribosomal subunit protein bS18 (81 aa).

This sequence belongs to the bacterial ribosomal protein bS18 family. Part of the 30S ribosomal subunit. Forms a tight heterodimer with protein bS6.

Functionally, binds as a heterodimer with protein bS6 to the central domain of the 16S rRNA, where it helps stabilize the platform of the 30S subunit. This is Small ribosomal subunit protein bS18 from Syntrophobacter fumaroxidans (strain DSM 10017 / MPOB).